Reading from the N-terminus, the 802-residue chain is Copper-exporting P-type ATPase (802 aa).

2 HMA domains span residues 5–70 and 72–138; these read KKTT…YGVA and ETVE…YDAS. Cu(+) contacts are provided by Cys-16, Cys-19, Cys-83, and Cys-86. 6 consecutive transmembrane segments (helical) span residues 161–181, 192–212, 224–244, 256–276, 411–431, and 438–458; these read LIIS…HLFN, WFQF…FYVG, MDVL…YEMI, LYFE…YLEA, YFVP…ITLV, and PALV…LGLA. The active-site 4-aspartylphosphate intermediate is Asp-495. Mg(2+) is bound by residues Asp-690 and Asp-694. The next 2 membrane-spanning stretches (helical) occupy residues 748 to 767 and 771 to 790; these read LFWA…LGLL and VAGA…ALRL.

The protein belongs to the cation transport ATPase (P-type) (TC 3.A.3) family. Type IB subfamily.

It localises to the cell membrane. It catalyses the reaction Cu(+)(in) + ATP + H2O = Cu(+)(out) + ADP + phosphate + H(+). Functionally, involved in copper export. This is Copper-exporting P-type ATPase (copA) from Staphylococcus aureus (strain bovine RF122 / ET3-1).